The primary structure comprises 307 residues: Small ribosomal subunit protein uS5m (307 aa).

A mitochondrion-targeting transit peptide spans 1-13 (MFKRQLSTSVRYL). One can recognise an S5 DRBM domain in the interval 144–208 (LTMKPLVMKR…WDAVRNLKEI (65 aa)).

Belongs to the universal ribosomal protein uS5 family. In terms of assembly, component of the mitochondrial small ribosomal subunit (mt-SSU). Mature yeast 74S mitochondrial ribosomes consist of a small (37S) and a large (54S) subunit. The 37S small subunit contains a 15S ribosomal RNA (15S mt-rRNA) and 34 different proteins. The 54S large subunit contains a 21S rRNA (21S mt-rRNA) and 46 different proteins. uS3m, uS4m and uS5m form the narrow entry site of the mRNA channel.

The protein resides in the mitochondrion. Its function is as follows. Component of the mitochondrial ribosome (mitoribosome), a dedicated translation machinery responsible for the synthesis of mitochondrial genome-encoded proteins, including at least some of the essential transmembrane subunits of the mitochondrial respiratory chain. The mitoribosomes are attached to the mitochondrial inner membrane and translation products are cotranslationally integrated into the membrane. The chain is Small ribosomal subunit protein uS5m (MRPS5) from Saccharomyces cerevisiae (strain ATCC 204508 / S288c) (Baker's yeast).